The primary structure comprises 91 residues: DNA-directed RNA polymerase subunit Rpo5 (91 aa).

The protein belongs to the archaeal Rpo5/eukaryotic RPB5 RNA polymerase subunit family. As to quaternary structure, part of the RNA polymerase complex.

It localises to the cytoplasm. It carries out the reaction RNA(n) + a ribonucleoside 5'-triphosphate = RNA(n+1) + diphosphate. In terms of biological role, DNA-dependent RNA polymerase (RNAP) catalyzes the transcription of DNA into RNA using the four ribonucleoside triphosphates as substrates. This chain is DNA-directed RNA polymerase subunit Rpo5, found in Staphylothermus marinus (strain ATCC 43588 / DSM 3639 / JCM 9404 / F1).